Here is a 185-residue protein sequence, read N- to C-terminus: DAN domain family member 5 (185 aa).

The signal sequence occupies residues 1 to 23 (MFRSQFTTLLGLFSGAWLPTGSG). The N-linked (GlcNAc...) asparagine glycan is linked to Asn39. 4 disulfides stabilise this stretch: Cys97–Cys144, Cys111–Cys158, Cys121–Cys179, and Cys125–Cys181. The CTCK domain occupies 97-182 (CKALSFVQVI…TVLVQKCQCR (86 aa)).

The protein belongs to the DAN family. Expressed throughout the neural retina and in the photoreceptor nuclear layer. In the retina, widely expressed in inner nuclear layer, as well as in the ganglion cell layer.

It localises to the secreted. In terms of biological role, antagonist of the extracellular signaling protein NODAL, which is required for correct left-right patterning during embryonic development. Antagonist of BMP4 signaling. Antagonist of TGF-beta signaling. Independently of its role in left-right axis establishment, plays a role during heart development, possibly through the regulation of TGF-beta/Nodal signaling pathway. Displays anti-angiogenic activity by inhibiting endothelial sprouting, migration, and proliferation. Once internalized by endothelial cells, may alter their redox and glycolytic balance. This chain is DAN domain family member 5 (Dand5), found in Mus musculus (Mouse).